The sequence spans 557 residues: Potassium-transporting ATPase potassium-binding subunit (557 aa).

The next 12 membrane-spanning stretches (helical) occupy residues 5-25, 63-83, 132-152, 170-190, 253-273, 283-303, 329-349, 356-376, 379-399, 416-436, 484-504, and 526-546; these read GFLLIATFLLVLMVLARPLGS, LCAILGLNMLGLAVLFFMLLG, GLTVQNFLSAASGIAVIFAFI, LLRITLWVLVPVALLIALFFI, FVQMLAIFLIPTALCFAFGEV, LLWAMSVIFVICVGVVMWAEV, VLVSSLFAVVTTAASCGAVIA, ALGGMVPMWLMQIGEVVFGGV, GLYGMMLFVLLAVFIAGLMIG, LTALAILVTPTLVLMGAALAM, LLAFCMFVGRFGVIIPVMAIA, and LFVGLLIGTVLLVGALTFIPA.

The protein belongs to the KdpA family. As to quaternary structure, the system is composed of three essential subunits: KdpA, KdpB and KdpC.

It localises to the cell inner membrane. Functionally, part of the high-affinity ATP-driven potassium transport (or Kdp) system, which catalyzes the hydrolysis of ATP coupled with the electrogenic transport of potassium into the cytoplasm. This subunit binds the periplasmic potassium ions and delivers the ions to the membrane domain of KdpB through an intramembrane tunnel. The sequence is that of Potassium-transporting ATPase potassium-binding subunit from Shigella flexneri.